Here is a 362-residue protein sequence, read N- to C-terminus: Ribosomal RNA large subunit methyltransferase F (362 aa).

A compositionally biased stretch (basic residues) spans Met1–Gln28. Positions Met1–Glu40 are disordered.

This sequence belongs to the methyltransferase superfamily. METTL16/RlmF family.

The protein resides in the cytoplasm. The enzyme catalyses adenosine(1618) in 23S rRNA + S-adenosyl-L-methionine = N(6)-methyladenosine(1618) in 23S rRNA + S-adenosyl-L-homocysteine + H(+). Functionally, specifically methylates the adenine in position 1618 of 23S rRNA. In Vibrio cholerae serotype O1 (strain M66-2), this protein is Ribosomal RNA large subunit methyltransferase F.